Reading from the N-terminus, the 1916-residue chain is Diacylglycerol kinase eta (1916 aa).

The segment at 1–36 is disordered; the sequence is MAHIKLDTLDVVQRPGTTRRSNSNSGRSSACSSGSL. The segment covering 19–36 has biased composition (low complexity); that stretch reads RRSNSNSGRSSACSSGSL. Positions 82–175 constitute a PH domain; that stretch reads AIIKEGFLLK…WLGSLKTATT (94 aa). 2 consecutive Phorbol-ester/DAG-type zinc fingers follow at residues 195 to 245 and 268 to 319; these read HHHW…IANC and PHQW…AVAC. Positions 350–486 constitute a DAGKc domain; that stretch reads GNFSPLLVFV…DRWSIMVFEK (137 aa). Residues 623-644 show a composition bias toward basic and acidic residues; that stretch reads DEINTKERRSSRSLRSSEKEAL. Disordered regions lie at residues 623–648, 846–874, 1018–1067, and 1183–1214; these read DEINTKERRSSRSLRSSEKEALQSRA, DRGKEGTEEKKGDIEKEKSSGTDVEKEDN, TLCS…DDNP, and TSTSPTKKSGHGQDISVVVRPPTPLRGDSVKP. In terms of domain architecture, SAM spans 1853-1916; it reads WSVNEVVTWL…LQAIKDLSEN (64 aa).

Belongs to the eukaryotic diacylglycerol kinase family.

Its subcellular location is the cytoplasm. The catalysed reaction is a 1,2-diacyl-sn-glycerol + ATP = a 1,2-diacyl-sn-glycero-3-phosphate + ADP + H(+). Functionally, phosphorylates diacylglycerol (DAG) to generate phosphatidic acid (PA). The protein is Diacylglycerol kinase eta of Drosophila ananassae (Fruit fly).